A 195-amino-acid polypeptide reads, in one-letter code: HTH-type transcriptional regulator BetI (195 aa).

An HTH tetR-type domain is found at 8-68; sequence SIRRRQLIDA…ATMRDITSQL (61 aa). A DNA-binding region (H-T-H motif) is located at residues 31-50; the sequence is TIAQIARRAGVSTGIISHYF.

The protein operates within amine and polyamine biosynthesis; betaine biosynthesis via choline pathway [regulation]. Repressor involved in the biosynthesis of the osmoprotectant glycine betaine. It represses transcription of the choline transporter BetT and the genes of BetAB involved in the synthesis of glycine betaine. This is HTH-type transcriptional regulator BetI from Escherichia coli (strain SMS-3-5 / SECEC).